The primary structure comprises 88 residues: Small cysteine and glycine repeat-containing protein 1 (88 aa).

The interval 4–72 (CGCGGCGGCG…TCSSCGYSCG (69 aa)) is 10 X 2 AA repeats of CG.

This sequence belongs to the KRTAP type 28 family.

In the hair cortex, hair keratin intermediate filaments are embedded in an interfilamentous matrix, consisting of hair keratin-associated proteins (KRTAP), which are essential for the formation of a rigid and resistant hair shaft through their extensive disulfide bond cross-linking with abundant cysteine residues of hair keratins. The matrix proteins include the high-sulfur and high-glycine-tyrosine keratins. The sequence is that of Small cysteine and glycine repeat-containing protein 1 from Homo sapiens (Human).